Consider the following 621-residue polypeptide: Uptake hydrogenase large subunit (621 aa).

Positions 75, 78, 600, and 603 each coordinate Ni(2+).

This sequence belongs to the [NiFe]/[NiFeSe] hydrogenase large subunit family. Heterodimer of a large and a small subunit. Ni(2+) serves as cofactor.

Its subcellular location is the cell membrane. The catalysed reaction is H2 + A = AH2. Its function is as follows. This enzyme recycles the H(2) produced by nitrogenase to increase the production of ATP and to protect nitrogenase against inhibition or damage by O(2) under carbon- or phosphate-limited conditions. This is Uptake hydrogenase large subunit (hupL) from Alcaligenes hydrogenophilus.